An 800-amino-acid polypeptide reads, in one-letter code: uncharacterized protein (800 aa).

The signal sequence occupies residues 1–21 (MNRFFISTLLLLAQHLAPAAA). A compositionally biased stretch (polar residues) spans 63-72 (SLSTGSPVEI). 3 disordered regions span residues 63–470 (SLST…PLTT), 602–670 (TPIT…SSTS), and 710–776 (SSLS…TPSS). Low complexity-rich tracts occupy residues 73 to 314 (TSTS…SSTS), 321 to 368 (STSS…SSTS), 375 to 444 (STSS…TSTP), and 451 to 470 (TTST…PLTT). Residues 710–720 (SSLSSIPNNST) are compositionally biased toward low complexity. Polar residues predominate over residues 721–734 (EVKTASTSSGTEIK). A compositionally biased stretch (low complexity) spans 735–776 (TASTSSGSSSSSSYTPASSTSTTTSSVSSRQSSSSSSFTPSS).

Its subcellular location is the secreted. The protein resides in the cell surface. This is an uncharacterized protein from Schizosaccharomyces pombe (strain 972 / ATCC 24843) (Fission yeast).